A 269-amino-acid chain; its full sequence is Hydroxyethylthiazole kinase (269 aa).

Residue Met-41 participates in substrate binding. ATP-binding residues include Arg-117 and Ser-163. Gly-190 contributes to the substrate binding site.

Belongs to the Thz kinase family. Mg(2+) serves as cofactor.

The enzyme catalyses 5-(2-hydroxyethyl)-4-methylthiazole + ATP = 4-methyl-5-(2-phosphooxyethyl)-thiazole + ADP + H(+). The protein operates within cofactor biosynthesis; thiamine diphosphate biosynthesis; 4-methyl-5-(2-phosphoethyl)-thiazole from 5-(2-hydroxyethyl)-4-methylthiazole: step 1/1. In terms of biological role, catalyzes the phosphorylation of the hydroxyl group of 4-methyl-5-beta-hydroxyethylthiazole (THZ). The protein is Hydroxyethylthiazole kinase of Latilactobacillus sakei subsp. sakei (strain 23K) (Lactobacillus sakei subsp. sakei).